A 377-amino-acid polypeptide reads, in one-letter code: F-box protein At4g00755 (377 aa).

Residues 7-47 (LDTDTSLSILSCLDDPSDIVRASAVSRSWRQFVVKYSLSKN) form the F-box domain.

In Arabidopsis thaliana (Mouse-ear cress), this protein is F-box protein At4g00755.